We begin with the raw amino-acid sequence, 271 residues long: S-adenosylmethionine decarboxylase proenzyme (271 aa).

S121 (schiff-base intermediate with substrate; via pyruvic acid) is an active-site residue. Pyruvic acid (Ser); by autocatalysis is present on S121. The active-site Proton acceptor; for processing activity is H126. C149 functions as the Proton donor; for catalytic activity in the catalytic mechanism.

Belongs to the prokaryotic AdoMetDC family. Type 2 subfamily. As to quaternary structure, heterooctamer of four alpha and four beta chains arranged as a tetramer of alpha/beta heterodimers. It depends on pyruvate as a cofactor. In terms of processing, is synthesized initially as an inactive proenzyme. Formation of the active enzyme involves a self-maturation process in which the active site pyruvoyl group is generated from an internal serine residue via an autocatalytic post-translational modification. Two non-identical subunits are generated from the proenzyme in this reaction, and the pyruvate is formed at the N-terminus of the alpha chain, which is derived from the carboxyl end of the proenzyme. The post-translation cleavage follows an unusual pathway, termed non-hydrolytic serinolysis, in which the side chain hydroxyl group of the serine supplies its oxygen atom to form the C-terminus of the beta chain, while the remainder of the serine residue undergoes an oxidative deamination to produce ammonia and the pyruvoyl group blocking the N-terminus of the alpha chain.

The catalysed reaction is S-adenosyl-L-methionine + H(+) = S-adenosyl 3-(methylsulfanyl)propylamine + CO2. The protein operates within amine and polyamine biosynthesis; S-adenosylmethioninamine biosynthesis; S-adenosylmethioninamine from S-adenosyl-L-methionine: step 1/1. Its function is as follows. Catalyzes the decarboxylation of S-adenosylmethionine to S-adenosylmethioninamine (dcAdoMet), the propylamine donor required for the synthesis of the polyamines spermine and spermidine from the diamine putrescine. The polypeptide is S-adenosylmethionine decarboxylase proenzyme (Clostridium perfringens (strain SM101 / Type A)).